A 626-amino-acid chain; its full sequence is Protein MICRORCHIDIA 2 (626 aa).

Residues 579 to 626 (MRCEEYIKKENETEQTVKSLEKELEEFKSKCAHLALLVDAKKKEMQQA) adopt a coiled-coil conformation.

Belongs to the MORC ATPase protein family. Homodimer and heterodimer with MORC6. Component of an RNA-directed DNA methylation (RdDM) complex that contains at least MORC6, MORC1/CRT1, MORC2, SWI3D and SUVH9. Binds directly to SUVH9. Mg(2+) serves as cofactor. Requires Mn(2+) as cofactor.

The protein localises to the nucleus. Its subcellular location is the endosome. Its function is as follows. Mediator of defense signaling triggered by distinct classes of R proteins. Required during hypersensitive response (HR) that confers disease resistance to turnip crinkle virus (TCV). Contributes to resistance against Pseudomonas syringae and Hyaloperonospora arabidopsidis, at early stages prior to cytosolic calcium ions Ca(2+) accumulation. Required for pathogen-associated molecular pattern (PAMP)-triggered immunity, basal resistance, non-host resistance and systemic acquired resistance (SAR). Involved in RNA-directed DNA methylation (RdDM) as a component of the RdDM machinery and required for gene silencing. May also be involved in the regulation of chromatin architecture to maintain gene silencing. Exhibits ATPase activity. The sequence is that of Protein MICRORCHIDIA 2 from Arabidopsis thaliana (Mouse-ear cress).